Here is a 351-residue protein sequence, read N- to C-terminus: Small ribosomal subunit biogenesis GTPase RsgA (351 aa).

A CP-type G domain is found at 107 to 277 (ENLLQRPDNF…LIDSPGIREF (171 aa)). GTP-binding positions include 163–166 (NKTD) and 219–227 (GQSGVGKSS). 4 residues coordinate Zn(2+): Cys301, Cys306, His308, and Cys314.

This sequence belongs to the TRAFAC class YlqF/YawG GTPase family. RsgA subfamily. As to quaternary structure, monomer. Associates with 30S ribosomal subunit, binds 16S rRNA. The cofactor is Zn(2+).

It is found in the cytoplasm. In terms of biological role, one of several proteins that assist in the late maturation steps of the functional core of the 30S ribosomal subunit. Helps release RbfA from mature subunits. May play a role in the assembly of ribosomal proteins into the subunit. Circularly permuted GTPase that catalyzes slow GTP hydrolysis, GTPase activity is stimulated by the 30S ribosomal subunit. The polypeptide is Small ribosomal subunit biogenesis GTPase RsgA (Marinobacter nauticus (strain ATCC 700491 / DSM 11845 / VT8) (Marinobacter aquaeolei)).